The following is a 679-amino-acid chain: Glycine--tRNA ligase beta subunit (679 aa).

This sequence belongs to the class-II aminoacyl-tRNA synthetase family. In terms of assembly, tetramer of two alpha and two beta subunits.

It localises to the cytoplasm. The catalysed reaction is tRNA(Gly) + glycine + ATP = glycyl-tRNA(Gly) + AMP + diphosphate. The protein is Glycine--tRNA ligase beta subunit of Streptococcus mutans serotype c (strain ATCC 700610 / UA159).